The chain runs to 157 residues: Small ribosomal subunit protein uS7 (157 aa).

Belongs to the universal ribosomal protein uS7 family. As to quaternary structure, part of the 30S ribosomal subunit. Contacts proteins S9 and S11.

Functionally, one of the primary rRNA binding proteins, it binds directly to 16S rRNA where it nucleates assembly of the head domain of the 30S subunit. Is located at the subunit interface close to the decoding center, probably blocks exit of the E-site tRNA. The polypeptide is Small ribosomal subunit protein uS7 (Borrelia garinii subsp. bavariensis (strain ATCC BAA-2496 / DSM 23469 / PBi) (Borreliella bavariensis)).